The chain runs to 712 residues: Lactoperoxidase (712 aa).

A signal peptide spans 1 to 22 (MWVCLQLPVFLASVTLFEVAAS). Residues 23 to 100 (DTIAQAASTT…WEESLKRLRR (78 aa)) constitute a propeptide that is removed on maturation. Asn-106 carries an N-linked (GlcNAc...) asparagine glycan. Disulfide bonds link Cys-123-Cys-284, Cys-132-Cys-145, Cys-246-Cys-256, and Cys-250-Cys-274. N-linked (GlcNAc...) asparagine glycosylation occurs at Asn-212. Position 225 (Asp-225) interacts with heme b. His-226 serves as the catalytic Proton acceptor. Asp-227 is a binding site for Ca(2+). Residues Thr-301, Phe-303, Asp-305, and Ser-307 each coordinate Ca(2+). Ser-315 bears the Phosphoserine mark. 2 N-linked (GlcNAc...) asparagine glycosylation sites follow: Asn-322 and Asn-358. A disulfide bond links Cys-354 and Cys-365. Glu-375 serves as a coordination point for heme b. Residue Asn-449 is glycosylated (N-linked (GlcNAc...) asparagine). His-468 lines the heme b pocket. Position 482 is a 3'-nitrotyrosine (Tyr-482). Intrachain disulfides connect Cys-573–Cys-630 and Cys-671–Cys-696.

Belongs to the peroxidase family. XPO subfamily. Requires Ca(2+) as cofactor. The cofactor is heme b. Mammary gland; milk.

The protein localises to the secreted. Its subcellular location is the cytoplasm. It carries out the reaction 2 a phenolic donor + H2O2 = 2 a phenolic radical donor + 2 H2O. The catalysed reaction is thiocyanate + H2O2 + H(+) = hypothiocyanous acid + H2O. It catalyses the reaction iodide + H2O2 = hypoiodite + H2O. In terms of biological role, heme-containing oxidoreductase which catalyzes the conversion of thiocyanate (SCN(-)) into antimicrobial agent hypothiocyanous acid (OSCN(-)) in the presence of hydrogen peroxide (H2O2). Also involved in the conversion of iodide (I(-)) into hypoiodite (IO(-)) in the presence of H2O2. Responsible for the inactivation of a wide range of micro-organisms and hence, important component of defense mechanism. The lactoperoxidase-SCN(-)-H2O2 system shows antibacterial properties against some streptococci strains. The lactoperoxidase-I(-)-H2O2 system shows antibacterial properties against E.coli. May protect the udder from infection and may promote growth in newborns. May be implicated in airway host defense against infection. May contribute to maintaining an appropriate H2O2 cellular level, therefore protecting cells from H2O2-caused injuries and inflammation. The protein is Lactoperoxidase (LPO) of Bos taurus (Bovine).